A 204-amino-acid polypeptide reads, in one-letter code: Crossover junction endodeoxyribonuclease RuvC (204 aa).

Active-site residues include D7, E68, and D141. D7, E68, and D141 together coordinate Mg(2+). Positions 164–204 (QAVAAHRTSGASRTPGAAGTPGPSRTPGAPGTSRTLKGRTA) are disordered.

The protein belongs to the RuvC family. As to quaternary structure, homodimer which binds Holliday junction (HJ) DNA. The HJ becomes 2-fold symmetrical on binding to RuvC with unstacked arms; it has a different conformation from HJ DNA in complex with RuvA. In the full resolvosome a probable DNA-RuvA(4)-RuvB(12)-RuvC(2) complex forms which resolves the HJ. Requires Mg(2+) as cofactor.

The protein localises to the cytoplasm. It catalyses the reaction Endonucleolytic cleavage at a junction such as a reciprocal single-stranded crossover between two homologous DNA duplexes (Holliday junction).. Functionally, the RuvA-RuvB-RuvC complex processes Holliday junction (HJ) DNA during genetic recombination and DNA repair. Endonuclease that resolves HJ intermediates. Cleaves cruciform DNA by making single-stranded nicks across the HJ at symmetrical positions within the homologous arms, yielding a 5'-phosphate and a 3'-hydroxyl group; requires a central core of homology in the junction. The consensus cleavage sequence is 5'-(A/T)TT(C/G)-3'. Cleavage occurs on the 3'-side of the TT dinucleotide at the point of strand exchange. HJ branch migration catalyzed by RuvA-RuvB allows RuvC to scan DNA until it finds its consensus sequence, where it cleaves and resolves the cruciform DNA. The sequence is that of Crossover junction endodeoxyribonuclease RuvC from Streptomyces griseus subsp. griseus (strain JCM 4626 / CBS 651.72 / NBRC 13350 / KCC S-0626 / ISP 5235).